The primary structure comprises 224 residues: Small ribosomal subunit protein uS2 (224 aa).

A compositionally biased stretch (basic and acidic residues) spans 1–14; it reads MAEAKPAPEKEAAV. Residues 1–32 are disordered; sequence MAEAKPAPEKEAAVKTESVPVADDEAASAKEG.

Belongs to the universal ribosomal protein uS2 family.

The protein is Small ribosomal subunit protein uS2 of Methanosarcina mazei (strain ATCC BAA-159 / DSM 3647 / Goe1 / Go1 / JCM 11833 / OCM 88) (Methanosarcina frisia).